A 229-amino-acid chain; its full sequence is Flagellar L-ring protein (229 aa).

Positions 1–23 (MLSRLGARALVCLAGVAMLAASG) are cleaved as a signal peptide. A lipid anchor (N-palmitoyl cysteine) is attached at Cys24. A lipid anchor (S-diacylglycerol cysteine) is attached at Cys24.

This sequence belongs to the FlgH family. The basal body constitutes a major portion of the flagellar organelle and consists of four rings (L,P,S, and M) mounted on a central rod.

It localises to the cell outer membrane. Its subcellular location is the bacterial flagellum basal body. In terms of biological role, assembles around the rod to form the L-ring and probably protects the motor/basal body from shearing forces during rotation. This Cupriavidus taiwanensis (strain DSM 17343 / BCRC 17206 / CCUG 44338 / CIP 107171 / LMG 19424 / R1) (Ralstonia taiwanensis (strain LMG 19424)) protein is Flagellar L-ring protein.